The primary structure comprises 313 residues: Ribosomal RNA small subunit methyltransferase H (313 aa).

S-adenosyl-L-methionine-binding positions include 35–37, Asp55, Phe79, Asp101, and Gln108; that span reads GGH.

The protein belongs to the methyltransferase superfamily. RsmH family.

It is found in the cytoplasm. The enzyme catalyses cytidine(1402) in 16S rRNA + S-adenosyl-L-methionine = N(4)-methylcytidine(1402) in 16S rRNA + S-adenosyl-L-homocysteine + H(+). Specifically methylates the N4 position of cytidine in position 1402 (C1402) of 16S rRNA. The chain is Ribosomal RNA small subunit methyltransferase H from Edwardsiella ictaluri (strain 93-146).